The sequence spans 117 residues: Immunoglobulin heavy variable 3-21 (117 aa).

An N-terminal signal peptide occupies residues 1-19 (MELGLRWVFLVAILEGVQC). The segment at 20–44 (EVQLVESGGGLVKPGGSLRLSCAAS) is framework-1. The region spanning 20–117 (EVQLVESGGG…EDTAVYYCAR (98 aa)) is the Ig-like domain. The cysteines at positions 41 and 115 are disulfide-linked. Positions 45–52 (GFTFSSYS) are complementarity-determining-1. A framework-2 region spans residues 53 to 69 (MNWVRQAPGKGLEWVSS). The complementarity-determining-2 stretch occupies residues 70 to 77 (ISSSSSYI). A framework-3 region spans residues 78 to 115 (YYADSVKGRFTISRDNAKNSLYLQMNSLRAEDTAVYYC). The segment at 116-117 (AR) is complementarity-determining-3.

Immunoglobulins are composed of two identical heavy chains and two identical light chains; disulfide-linked.

It is found in the secreted. The protein resides in the cell membrane. V region of the variable domain of immunoglobulin heavy chains that participates in the antigen recognition. Immunoglobulins, also known as antibodies, are membrane-bound or secreted glycoproteins produced by B lymphocytes. In the recognition phase of humoral immunity, the membrane-bound immunoglobulins serve as receptors which, upon binding of a specific antigen, trigger the clonal expansion and differentiation of B lymphocytes into immunoglobulins-secreting plasma cells. Secreted immunoglobulins mediate the effector phase of humoral immunity, which results in the elimination of bound antigens. The antigen binding site is formed by the variable domain of one heavy chain, together with that of its associated light chain. Thus, each immunoglobulin has two antigen binding sites with remarkable affinity for a particular antigen. The variable domains are assembled by a process called V-(D)-J rearrangement and can then be subjected to somatic hypermutations which, after exposure to antigen and selection, allow affinity maturation for a particular antigen. The chain is Immunoglobulin heavy variable 3-21 from Homo sapiens (Human).